A 59-amino-acid chain; its full sequence is Large ribosomal subunit protein bL32 (59 aa).

A compositionally biased stretch (basic residues) spans 1 to 19 (MAQPKKKTSKSRRNMRRSH). The segment at 1-20 (MAQPKKKTSKSRRNMRRSHD) is disordered.

The protein belongs to the bacterial ribosomal protein bL32 family.

The polypeptide is Large ribosomal subunit protein bL32 (Maridesulfovibrio salexigens (strain ATCC 14822 / DSM 2638 / NCIMB 8403 / VKM B-1763) (Desulfovibrio salexigens)).